A 404-amino-acid polypeptide reads, in one-letter code: Chorismate synthase (404 aa).

NADP(+)-binding residues include Arg40 and Arg46. FMN contacts are provided by residues Arg135–Ser137, Gln256–Ala257, Gly300, Lys315–Thr319, and Arg341.

It belongs to the chorismate synthase family. Homotetramer. FMNH2 is required as a cofactor.

It carries out the reaction 5-O-(1-carboxyvinyl)-3-phosphoshikimate = chorismate + phosphate. It functions in the pathway metabolic intermediate biosynthesis; chorismate biosynthesis; chorismate from D-erythrose 4-phosphate and phosphoenolpyruvate: step 7/7. Catalyzes the anti-1,4-elimination of the C-3 phosphate and the C-6 proR hydrogen from 5-enolpyruvylshikimate-3-phosphate (EPSP) to yield chorismate, which is the branch point compound that serves as the starting substrate for the three terminal pathways of aromatic amino acid biosynthesis. This reaction introduces a second double bond into the aromatic ring system. In Mycobacterium sp. (strain JLS), this protein is Chorismate synthase.